The primary structure comprises 1420 residues: DNA-directed RNA polymerase subunit beta' (1420 aa).

4 residues coordinate Zn(2+): cysteine 71, cysteine 73, cysteine 86, and cysteine 89. Positions 461, 463, and 465 each coordinate Mg(2+). Residues cysteine 815, cysteine 889, cysteine 896, and cysteine 899 each coordinate Zn(2+).

The protein belongs to the RNA polymerase beta' chain family. As to quaternary structure, the RNAP catalytic core consists of 2 alpha, 1 beta, 1 beta' and 1 omega subunit. When a sigma factor is associated with the core the holoenzyme is formed, which can initiate transcription. It depends on Mg(2+) as a cofactor. Zn(2+) is required as a cofactor.

It carries out the reaction RNA(n) + a ribonucleoside 5'-triphosphate = RNA(n+1) + diphosphate. Its function is as follows. DNA-dependent RNA polymerase catalyzes the transcription of DNA into RNA using the four ribonucleoside triphosphates as substrates. The chain is DNA-directed RNA polymerase subunit beta' from Histophilus somni (strain 129Pt) (Haemophilus somnus).